Reading from the N-terminus, the 409-residue chain is Elongation factor Tu, chloroplastic (409 aa).

The tr-type G domain occupies 10–214 (KPHVNIGTIG…AVDTYIPTPE (205 aa)). A G1 region spans residues 19–26 (GHVDHGKT). 19–26 (GHVDHGKT) serves as a coordination point for GTP. Thr-26 is a binding site for Mg(2+). The G2 stretch occupies residues 60–64 (GITIN). The segment at 81 to 84 (DCPG) is G3. GTP-binding positions include 81–85 (DCPGH) and 136–139 (NKED). Positions 136-139 (NKED) are G4. Residues 174–176 (SAL) form a G5 region.

It belongs to the TRAFAC class translation factor GTPase superfamily. Classic translation factor GTPase family. EF-Tu/EF-1A subfamily.

It localises to the plastid. Its subcellular location is the chloroplast. The catalysed reaction is GTP + H2O = GDP + phosphate + H(+). Its function is as follows. GTP hydrolase that promotes the GTP-dependent binding of aminoacyl-tRNA to the A-site of ribosomes during protein biosynthesis. This Porphyra purpurea (Red seaweed) protein is Elongation factor Tu, chloroplastic (tufA).